The chain runs to 263 residues: Acetyl-coenzyme A carboxylase carboxyl transferase subunit beta (263 aa).

The region spanning 1 to 263 (MDCPSCKVSY…LKETPKKKKA (263 aa)) is the CoA carboxyltransferase N-terminal domain. Zn(2+) contacts are provided by C3, C6, C22, and C25. A C4-type zinc finger spans residues 3-25 (CPSCKVSYDEEVFTDNLMVCPHC).

This sequence belongs to the AccD/PCCB family. As to quaternary structure, acetyl-CoA carboxylase is a heterohexamer composed of biotin carboxyl carrier protein (AccB), biotin carboxylase (AccC) and two subunits each of ACCase subunit alpha (AccA) and ACCase subunit beta (AccD). Zn(2+) is required as a cofactor.

It localises to the cytoplasm. It carries out the reaction N(6)-carboxybiotinyl-L-lysyl-[protein] + acetyl-CoA = N(6)-biotinyl-L-lysyl-[protein] + malonyl-CoA. Its pathway is lipid metabolism; malonyl-CoA biosynthesis; malonyl-CoA from acetyl-CoA: step 1/1. Component of the acetyl coenzyme A carboxylase (ACC) complex. Biotin carboxylase (BC) catalyzes the carboxylation of biotin on its carrier protein (BCCP) and then the CO(2) group is transferred by the transcarboxylase to acetyl-CoA to form malonyl-CoA. The protein is Acetyl-coenzyme A carboxylase carboxyl transferase subunit beta of Treponema denticola (strain ATCC 35405 / DSM 14222 / CIP 103919 / JCM 8153 / KCTC 15104).